The chain runs to 149 residues: Large ribosomal subunit protein bL9 (149 aa).

The protein belongs to the bacterial ribosomal protein bL9 family.

Functionally, binds to the 23S rRNA. The protein is Large ribosomal subunit protein bL9 of Geobacillus kaustophilus (strain HTA426).